We begin with the raw amino-acid sequence, 368 residues long: Cobalt-precorrin-5B C(1)-methyltransferase (368 aa).

The protein belongs to the CbiD family.

The enzyme catalyses Co-precorrin-5B + S-adenosyl-L-methionine = Co-precorrin-6A + S-adenosyl-L-homocysteine. It functions in the pathway cofactor biosynthesis; adenosylcobalamin biosynthesis; cob(II)yrinate a,c-diamide from sirohydrochlorin (anaerobic route): step 6/10. Functionally, catalyzes the methylation of C-1 in cobalt-precorrin-5B to form cobalt-precorrin-6A. The protein is Cobalt-precorrin-5B C(1)-methyltransferase of Synechococcus sp. (strain CC9605).